The sequence spans 244 residues: MRNIKLTIEYDGTSYFGWQKQPIGNTIQQKVEEAIKKVTKEEVEILGSSRTDSGVHAKAYVANFKTNSNIPGKNFKAALNSKLPKDIVIINSEEVAEDFHARYMTTGKTYCYTILNREEPPALERNYVYHVKKQLDVESMKEACKYFLGKHDFKAFQRPGGTVKTSVRTITDIHIETEGNKIKIYVSADGFLYNMVRLIVGTLLKVGRGKEKPEYIKEVIDSGDRKKAGICVPPTGLCLEKVFY.

Asp-52 serves as the catalytic Nucleophile. Substrate is bound at residue Tyr-110.

It belongs to the tRNA pseudouridine synthase TruA family. As to quaternary structure, homodimer.

It catalyses the reaction uridine(38/39/40) in tRNA = pseudouridine(38/39/40) in tRNA. In terms of biological role, formation of pseudouridine at positions 38, 39 and 40 in the anticodon stem and loop of transfer RNAs. The chain is tRNA pseudouridine synthase A 2 from Clostridium perfringens (strain 13 / Type A).